A 156-amino-acid chain; its full sequence is NADH-ubiquinone oxidoreductase 20 kDa subunit (156 aa).

Residues Cys33, Cys34, Cys98, and Cys128 each contribute to the [4Fe-4S] cluster site.

It belongs to the complex I 20 kDa subunit family. Requires [4Fe-4S] cluster as cofactor.

Its subcellular location is the mitochondrion. It catalyses the reaction a ubiquinone + NADH + 5 H(+)(in) = a ubiquinol + NAD(+) + 4 H(+)(out). This chain is NADH-ubiquinone oxidoreductase 20 kDa subunit (NAD10), found in Paramecium tetraurelia.